We begin with the raw amino-acid sequence, 848 residues long: MLQPYRKMLIFAVVTVAFAMAVWSTPVPATPSGVGNATWANNSFNITRYDKITMGQVYSNTSNSPIFFVVISERNFRIVNTPLGASVFWIPKGAMNPPQHQPCVANGPEPGDPRGPCVNSTVSLLFNENVEPFLMSKNLLEFEVLPDTYITGWTFERSKTATTKSNPVGVVLSPPRGSPSANTTIRDDGGPKKPLSIIDEYTTLVADLQNFTMTLTYISPFAAVWPIEAFQTGITVMGCDTTQVVAYLGHGFMGLQISSVNNPPLEMIVVPNDVSARILNRRPSRLRLEPPGPHAGPIYKVYVLSDGNFYLGHGMSRISREVAAYPEESLDYRYHLSLANLDTLAMLAELSSGKSTDVSYYMYRIVARLAVATFSLAEVIRLSDYMLLQEAIDVDMNLRLIVPLVMKYAAGGAADSSYTSSDVAMDQFDVAQSQIEKIVSDINVEAELRKPMYEHRSLLRSVYAYSRKPLPNAVALADRLILAMYKEAIKDRITWNSTMREVLFFAVGAAAGSHVILTDEPEPGAPAHKDASLFLSLNRNILLLCTAMCTASHAVSAGLKLEEVMAGLVAGGVQFSLLEVFSPCMASTRFDLAEEEHVLDLLSVIPPRLYTDLNTGFEDDGTTIHSYGRSANGILNSRIAYNFDAVSVFTPELASCSTKLPKVLVVLPIFTNRSYVITRTAPSIGLTYSLDGVNIAKPIVISYITYGNCEVSRATIKSGYLDNPGHTQTCVYCGSVFMRYMVSGAIMDLIYIDDKEVELQLVAGENSTIPAFNPKLYTPSMNALLMFPNGTVTLMSAFASYSSFKVPSTYLWASIGGLLLAILILYIIIKMLCGGVTNDGYKLLLSYE.

An N-terminal signal peptide occupies residues 1–24 (MLQPYRKMLIFAVVTVAFAMAVWS). Over 25 to 808 (TPVPATPSGV…ASYSSFKVPS (784 aa)) the chain is Virion surface. N-linked (GlcNAc...) asparagine; by host glycans are attached at residues Asn36, Asn41, Asn45, Asn60, Asn119, Asn182, and Asn210. The tract at residues 166–191 (NPVGVVLSPPRGSPSANTTIRDDGGP) is disordered. The interaction with gL stretch occupies residues 240 to 303 (DTTQVVAYLG…HAGPIYKVYV (64 aa)). Residues Asn496, Asn672, Asn766, and Asn789 are each glycosylated (N-linked (GlcNAc...) asparagine; by host). Residues 809–829 (TYLWASIGGLLLAILILYIII) form a helical membrane-spanning segment. Residues 830–848 (KMLCGGVTNDGYKLLLSYE) are Intravirion-facing.

This sequence belongs to the herpesviridae glycoprotein H family. In terms of assembly, interacts with glycoprotein L (gL); this interaction is necessary for the correct processing and cell surface expression of gH. The heterodimer gH/gL seems to interact with gB trimers during fusion. N-glycosylated, O-glycosylated, and sialylated.

It is found in the virion membrane. The protein localises to the host cell membrane. The protein resides in the host endosome membrane. Functionally, the heterodimer glycoprotein H-glycoprotein L is required for the fusion of viral and plasma membranes leading to virus entry into the host cell. Following initial binding to host receptor, membrane fusion is mediated by the fusion machinery composed of gB and the heterodimer gH/gL. May also be involved in the fusion between the virion envelope and the outer nuclear membrane during virion morphogenesis. The chain is Envelope glycoprotein H from Equus caballus (Horse).